The primary structure comprises 582 residues: Proline--tRNA ligase (582 aa).

It belongs to the class-II aminoacyl-tRNA synthetase family. ProS type 1 subfamily. Homodimer.

It is found in the cytoplasm. The catalysed reaction is tRNA(Pro) + L-proline + ATP = L-prolyl-tRNA(Pro) + AMP + diphosphate. Catalyzes the attachment of proline to tRNA(Pro) in a two-step reaction: proline is first activated by ATP to form Pro-AMP and then transferred to the acceptor end of tRNA(Pro). As ProRS can inadvertently accommodate and process non-cognate amino acids such as alanine and cysteine, to avoid such errors it has two additional distinct editing activities against alanine. One activity is designated as 'pretransfer' editing and involves the tRNA(Pro)-independent hydrolysis of activated Ala-AMP. The other activity is designated 'posttransfer' editing and involves deacylation of mischarged Ala-tRNA(Pro). The misacylated Cys-tRNA(Pro) is not edited by ProRS. The sequence is that of Proline--tRNA ligase from Mycobacterium ulcerans (strain Agy99).